The following is a 469-amino-acid chain: 2-amino-4-ketopentanoate thiolase beta subunit (469 aa).

The residue at position 102 (K102) is an N6-(pyridoxal phosphate)lysine. Pyridoxal 5'-phosphate-binding positions include N128 and 238–242; that span reads AGGGN.

It belongs to the threonine synthase family. As to quaternary structure, heterodimer with OrtA. It depends on pyridoxal 5'-phosphate as a cofactor.

It catalyses the reaction D-alanine + acetyl-CoA = (2R)-2-amino-4-oxopentanoate + CoA. Completely inhibited by p-chloromercuribenzoate (p-ClHgBzO) and acetyl-CoA, and partially inhibited by N-ethylmaleimide. Its function is as follows. Involved in the ornithine fermentation pathway. Catalyzes the thiolytic cleavage of 2-amino-4-ketopentanoate (AKP) with coenzyme A (CoA) to form acetyl-CoA and alanine. It is strictly specific for AKP. This Acetoanaerobium sticklandii (strain ATCC 12662 / DSM 519 / JCM 1433 / CCUG 9281 / NCIMB 10654 / HF) (Clostridium sticklandii) protein is 2-amino-4-ketopentanoate thiolase beta subunit.